Reading from the N-terminus, the 992-residue chain is Meckelin (992 aa).

The first 35 residues, 1–35 (MVMRTRPLAAMAVRSCFSALTGTVYLLLVLCEVSW), serve as a signal peptide directing secretion. Over 36 to 516 (AQIFSFPFQR…SVKYEMNQGD (481 aa)) the chain is Extracellular. A cysteine-rich region spans residues 37–280 (QIFSFPFQRP…FHYVFEGAAG (244 aa)). 12 disulfides stabilise this stretch: cysteine 49/cysteine 62, cysteine 65/cysteine 78, cysteine 80/cysteine 97, cysteine 100/cysteine 114, cysteine 117/cysteine 127, cysteine 129/cysteine 150, cysteine 153/cysteine 170, cysteine 173/cysteine 184, cysteine 186/cysteine 197, cysteine 237/cysteine 246, cysteine 253/cysteine 268, and cysteine 354/cysteine 375. N-linked (GlcNAc...) asparagine glycosylation is present at asparagine 242. The helical transmembrane segment at 517–545 (AFVQTDIALGVLGGLAVLSSLLKTAGWKR) threads the bilayer. At 546–555 (RIGSPMIDLQ) the chain is on the cytoplasmic side. The helical transmembrane segment at 556–587 (TVMKFLLYYAGDLANVFFIITVGTGLYWLIFF) threads the bilayer. Over 588–600 (KAQKSVSVLLPMP) the chain is Extracellular. The chain crosses the membrane as a helical span at residues 601-628 (VQEERFVTYVGCAFAMKALQFLHKLISQ). Over 629 to 667 (ITIDIFFIDWERPKGKVLKAVEGEGGVRSATVPVSIWRT) the chain is Cytoplasmic. The segment at residues 668–676 (YFVANEWNE) is an intramembrane region (helical). The chain crosses the membrane as a discontinuously helical span at residues 668 to 698 (YFVANEWNEIQTVRKINPLFQVLTTLFFLEV). The stretch at 677 to 685 (IQTVRKINP) is an intramembrane region. An intramembrane region (helical) is located at residues 686–698 (LFQVLTTLFFLEV). Residues 699-728 (VGFKNLALMDPSSSLSRSLSDYAAPYSRIL) are Extracellular-facing. The segment at residues 729-754 (RYAVATTIWLVIGIVQVVFFAAFYER) is an intramembrane region (helical). The chain crosses the membrane as a discontinuously helical span at residues 729–768 (RYAVATTIWLVIGIVQVVFFAAFYERFIEDKIRQFVDLCS). An intramembrane segment occupies 755 to 759 (FIEDK). Residues 760-768 (IRQFVDLCS) constitute an intramembrane region (helical). Over 769 to 923 (MSNVSVFLLS…SIFYNDESHS (155 aa)) the chain is Cytoplasmic. An intramembrane region (helical) is located at residues 924–926 (FSS). A discontinuously helical membrane pass occupies residues 924 to 949 (FSSVLYYGNEATLLIFDLLFFCVVDL). Residues 927 to 933 (VLYYGNE) lie within the membrane without spanning it. An intramembrane region (helical) is located at residues 934–949 (ATLLIFDLLFFCVVDL). Topologically, residues 950 to 954 (ACQNF) are extracellular. The helical transmembrane segment at 955-982 (VLASFLTYLQQEIFRFIRNTVGQKNLAT) threads the bilayer. Residues 983 to 992 (KTLVDERFLI) lie on the Cytoplasmic side of the membrane.

In terms of assembly, homodimer. Part of the tectonic-like complex (also named B9 complex). Interacts with DNAJB9, DNAJC10 and mutated SFTPC. Interacts with SYNE2 during the early establishment of cell polarity. Interacts (via C-terminus) with FLNA. Interacts with TMEM218. Interacts with WNT5A. Interacts with ROR2.

It localises to the cell membrane. The protein localises to the endoplasmic reticulum membrane. Its subcellular location is the cytoplasm. It is found in the cytoskeleton. The protein resides in the cilium basal body. Part of the tectonic-like complex which is required for tissue-specific ciliogenesis and may regulate ciliary membrane composition. Involved in centrosome migration to the apical cell surface during early ciliogenesis. Required for ciliary structure and function, including a role in regulating length and appropriate number through modulating centrosome duplication. Is a key regulator of stereociliary bundle orientation. Required for epithelial cell branching morphology. Essential for endoplasmic reticulum-associated degradation (ERAD) of surfactant protein C (sftpc). Involved in the negative regulation of canonical Wnt signaling, and activation of the non-canonical cascade stimulated by WNT5A. In non-canonical Wnt signaling, it may act as ROR2 coreceptor. The polypeptide is Meckelin (Tmem67) (Rattus norvegicus (Rat)).